An 878-amino-acid chain; its full sequence is Glycogen [starch] synthase (878 aa).

K61 contacts UDP-alpha-D-glucose. Disordered regions lie at residues 637 to 721 and 746 to 878; these read PPKP…NVIP and NEFK…KSLK. Composition is skewed to low complexity over residues 641–656 and 666–676; these read ISRS…LKLS and QQQQQQQQPQP. Residues 677-692 are compositionally biased toward polar residues; that stretch reads IGTTINLIPPSSNVSV. Composition is skewed to low complexity over residues 693 to 715, 746 to 781, 795 to 830, and 838 to 878; these read TPTT…ITTP, NEFK…AAAT, PNTS…NGKP, and TKSN…KSLK.

It belongs to the glycosyltransferase 3 family.

It carries out the reaction [(1-&gt;4)-alpha-D-glucosyl](n) + UDP-alpha-D-glucose = [(1-&gt;4)-alpha-D-glucosyl](n+1) + UDP + H(+). It functions in the pathway glycan biosynthesis; glycogen biosynthesis. Its function is as follows. Catalyzes the formation of apha-1,4 glycosidic bonds adding glucose residue from UDPG to the growing chain of glycogen. In Dictyostelium discoideum (Social amoeba), this protein is Glycogen [starch] synthase (glcS).